The sequence spans 295 residues: Nucleotide-binding protein LSL_1171 (295 aa).

Residue Gly-13–Thr-20 coordinates ATP. Asp-63–Ser-66 contacts GTP.

The protein belongs to the RapZ-like family.

Functionally, displays ATPase and GTPase activities. In Ligilactobacillus salivarius (strain UCC118) (Lactobacillus salivarius), this protein is Nucleotide-binding protein LSL_1171.